A 246-amino-acid polypeptide reads, in one-letter code: tRNA (guanine-N(7)-)-methyltransferase (246 aa).

The tract at residues 1-23 (MIESSSPTPPALHEGAPADVSHP) is disordered. S-adenosyl-L-methionine contacts are provided by E75, E100, D127, and D150. The active site involves D150. K154 is a substrate binding site. An interaction with RNA region spans residues 156–161 (KHNKRR). Substrate is bound by residues D186 and 225–228 (TKFE).

It belongs to the class I-like SAM-binding methyltransferase superfamily. TrmB family.

It carries out the reaction guanosine(46) in tRNA + S-adenosyl-L-methionine = N(7)-methylguanosine(46) in tRNA + S-adenosyl-L-homocysteine. Its pathway is tRNA modification; N(7)-methylguanine-tRNA biosynthesis. Catalyzes the formation of N(7)-methylguanine at position 46 (m7G46) in tRNA. The sequence is that of tRNA (guanine-N(7)-)-methyltransferase from Polaromonas naphthalenivorans (strain CJ2).